A 616-amino-acid polypeptide reads, in one-letter code: Probable Xaa-Pro aminopeptidase P (616 aa).

Residues Asp-413, Asp-424, Glu-522, and Glu-536 each contribute to the Mn(2+) site.

Belongs to the peptidase M24B family. It depends on Mn(2+) as a cofactor.

It carries out the reaction Release of any N-terminal amino acid, including proline, that is linked to proline, even from a dipeptide or tripeptide.. Its function is as follows. Catalyzes the removal of a penultimate prolyl residue from the N-termini of peptides. This chain is Probable Xaa-Pro aminopeptidase P (AMPP), found in Paracoccidioides brasiliensis (strain Pb03).